The following is a 332-amino-acid chain: Cell growth regulator with RING finger domain protein 1 (332 aa).

An RING-type zinc finger spans residues 274–309 (CVVCQNGGVNWVLLPCRHACLCDSCVRYFKQCPMCR).

The protein localises to the nucleus. Its subcellular location is the endoplasmic reticulum. In terms of biological role, able to inhibit growth in several cell lines. The sequence is that of Cell growth regulator with RING finger domain protein 1 (Cgrrf1) from Mus musculus (Mouse).